Reading from the N-terminus, the 60-residue chain is Waprin-Lio1 (60 aa).

A signal peptide spans 1–8; it reads MLLGTTSA. The WAP domain maps to 9–59; the sequence is QVVRPGSCPNVDVPIPPLGLCRTTCQTDANCQEGRKCCKNGCGFMTCETAR. Cystine bridges form between Cys16–Cys46, Cys29–Cys50, Cys33–Cys45, and Cys39–Cys55.

Belongs to the venom waprin family. Expressed by the venom gland.

The protein resides in the secreted. In terms of biological role, damages membranes of susceptible bacteria. Has no hemolytic activity. Not toxic to mice. Does not inhibit the proteinases elastase and cathepsin G. The polypeptide is Waprin-Lio1 (Erythrolamprus poecilogyrus (Water snake)).